The following is a 1400-amino-acid chain: Tiny macrocysts protein C (1400 aa).

Transmembrane regions (helical) follow at residues 59–79, 112–132, 152–172, 196–216, 240–260, 266–286, 296–316, and 320–340; these read ILTI…GFKQ, IFFW…WYVA, FVST…LIGL, ANLS…IVGF, FDVY…LVDF, SIVY…ILPY, SGFY…MGIN, and TATT…IGYF. Disordered regions lie at residues 367–393 and 683–712; these read FNEI…SKVT and ERSG…RGKY. Residues 369 to 386 show a composition bias toward basic and acidic residues; that stretch reads EITKNEKSKTGDSKEKES. The next 4 membrane-spanning stretches (helical) occupy residues 726-746, 975-995, 1162-1182, and 1342-1362; these read WLMI…LIVL, TMLY…AVLF, VLAI…TYSV, and VLTS…LLLF.

Its subcellular location is the membrane. The protein is Tiny macrocysts protein C (tmcC) of Dictyostelium discoideum (Social amoeba).